Here is a 164-residue protein sequence, read N- to C-terminus: MPEPAKFAPAPKKGSKKAVTKAQKKDGKKRKRSRKESYSIYVYKVLKRVHPDTGIWCKAMGIMNSFLNDIFERIAGEASRLAHYNKRSTITSRRSRRPCACCCPASWPSTPCPRAPRRSPSTPAPSESLPGPGARSLPPSLPPRVAGCFVSKGSFQGHLTPLVK.

Residues 1–12 are compositionally biased toward low complexity; that stretch reads MPEPAKFAPAPK. The segment at 1–33 is disordered; the sequence is MPEPAKFAPAPKKGSKKAVTKAQKKDGKKRKRS. Position 2 is an N-acetylproline (proline 2). N6-(2-hydroxyisobutyryl)lysine; alternate is present on lysine 6. 2 positions are modified to N6-(beta-hydroxybutyryl)lysine; alternate: lysine 6 and lysine 12. Residues lysine 6, lysine 12, and lysine 13 each carry the N6-acetyllysine; alternate modification. Lysine 6 carries the post-translational modification N6-butyryllysine; alternate. N6-crotonyllysine; alternate is present on residues lysine 6, lysine 12, and lysine 13. N6-lactoyllysine; alternate occurs at positions 6 and 12. Lysine 6 is covalently cross-linked (Glycyl lysine isopeptide (Lys-Gly) (interchain with G-Cter in SUMO2); alternate). The residue at position 13 (lysine 13) is an N6-(2-hydroxyisobutyryl)lysine; alternate. Serine 15 bears the Phosphoserine; by STK4/MST1 mark. Residues lysine 16, lysine 17, lysine 21, and lysine 24 each carry the N6-acetyllysine; alternate modification. Lysine 16, lysine 17, lysine 21, and lysine 24 each carry N6-crotonyllysine; alternate. 4 positions are modified to N6-lactoyllysine; alternate: lysine 16, lysine 17, lysine 21, and lysine 24. An N6-(beta-hydroxybutyryl)lysine; alternate mark is found at lysine 17 and lysine 21. Lysine 17 bears the N6-glutaryllysine; alternate mark. An N6-(2-hydroxyisobutyryl)lysine; alternate mark is found at lysine 21 and lysine 24. Lysine 21 carries the post-translational modification N6-butyryllysine; alternate. Residue lysine 21 forms a Glycyl lysine isopeptide (Lys-Gly) (interchain with G-Cter in SUMO2); alternate linkage. Residue lysine 25 is modified to N6-(2-hydroxyisobutyryl)lysine. Residue lysine 35 is modified to N6-(2-hydroxyisobutyryl)lysine; alternate. Lysine 35 carries the N6-(beta-hydroxybutyryl)lysine; alternate modification. Lysine 35 carries the post-translational modification N6-crotonyllysine; alternate. N6-glutaryllysine; alternate is present on lysine 35. The residue at position 35 (lysine 35) is an N6-succinyllysine; alternate. Residue lysine 35 forms a Glycyl lysine isopeptide (Lys-Gly) (interchain with G-Cter in ubiquitin); alternate linkage. Serine 37 carries the phosphoserine; by AMPK modification. N6-(2-hydroxyisobutyryl)lysine; alternate occurs at positions 44, 47, and 58. Position 44 is an N6-lactoyllysine; alternate (lysine 44). Residues lysine 44 and lysine 47 each carry the N6-glutaryllysine; alternate modification. An N6-methyllysine; alternate modification is found at lysine 47. Lysine 58 is subject to N6,N6-dimethyllysine; alternate. The residue at position 80 (arginine 80) is a Dimethylated arginine. Lysine 86 bears the N6-(2-hydroxyisobutyryl)lysine; alternate mark. Position 86 is an N6-(beta-hydroxybutyryl)lysine; alternate (lysine 86). An N6-acetyllysine; alternate modification is found at lysine 86. Lysine 86 bears the N6-lactoyllysine; alternate mark. The residue at position 86 (lysine 86) is an N6,N6,N6-trimethyllysine; alternate. Arginine 87 and arginine 93 each carry omega-N-methylarginine. The interval 111-140 is disordered; it reads PCPRAPRRSPSTPAPSESLPGPGARSLPPS.

Belongs to the histone H2B family. The nucleosome is a histone octamer containing two molecules each of H2A, H2B, H3 and H4 assembled in one H3-H4 heterotetramer and two H2A-H2B heterodimers. The octamer wraps approximately 147 bp of DNA. In terms of processing, phosphorylation at Ser-37 (H2BS36ph) by AMPK in response to stress promotes transcription. Phosphorylated on Ser-15 (H2BS14ph) by STK4/MST1 during apoptosis; which facilitates apoptotic chromatin condensation. Also phosphorylated on Ser-15 in response to DNA double strand breaks (DSBs), and in correlation with somatic hypermutation and immunoglobulin class-switch recombination. Crotonylation (Kcr) is specifically present in male germ cells and marks testis-specific genes in post-meiotic cells, including X-linked genes that escape sex chromosome inactivation in haploid cells. Crotonylation marks active promoters and enhancers and confers resistance to transcriptional repressors. It is also associated with post-meiotically activated genes on autosomes. Post-translationally, lactylated in macrophages by EP300/P300 by using lactoyl-CoA directly derived from endogenous or exogenous lactate, leading to stimulates gene transcription.

It is found in the nucleus. It localises to the chromosome. Core component of nucleosome. Nucleosomes wrap and compact DNA into chromatin, limiting DNA accessibility to the cellular machineries which require DNA as a template. Histones thereby play a central role in transcription regulation, DNA repair, DNA replication and chromosomal stability. DNA accessibility is regulated via a complex set of post-translational modifications of histones, also called histone code, and nucleosome remodeling. This is Putative histone H2B type 2-D from Homo sapiens (Human).